A 302-amino-acid chain; its full sequence is 1D-myo-inositol 2-acetamido-2-deoxy-alpha-D-glucopyranoside deacetylase (302 aa).

3 residues coordinate Zn(2+): His13, Asp16, and His155.

This sequence belongs to the MshB deacetylase family. The cofactor is Zn(2+).

It carries out the reaction 1D-myo-inositol 2-acetamido-2-deoxy-alpha-D-glucopyranoside + H2O = 1D-myo-inositol 2-amino-2-deoxy-alpha-D-glucopyranoside + acetate. Catalyzes the deacetylation of 1D-myo-inositol 2-acetamido-2-deoxy-alpha-D-glucopyranoside (GlcNAc-Ins) in the mycothiol biosynthesis pathway. The protein is 1D-myo-inositol 2-acetamido-2-deoxy-alpha-D-glucopyranoside deacetylase of Nocardioides sp. (strain ATCC BAA-499 / JS614).